A 1143-amino-acid chain; its full sequence is Disease resistance protein Pik-1 (1143 aa).

The structured coiled coil (CC) domain stretch occupies residues 1 to 190 (MEAAAMAVTA…PLRIMGGEMQ (190 aa)). An HMA domain is found at 189–258 (MQKIVFKIPM…KVGHAELLQV (70 aa)). The HMA-like domain stretch occupies residues 191-264 (KIVFKIPMVD…LLQVSQVKED (74 aa)). Residues 282-570 (HEVKTICILG…WIAEGFVSEE (289 aa)) enclose the NB-ARC domain. LRR repeat units lie at residues 681–706 (FKRLRVLDLEDNKDIQDSHLQGICEQ), 708–731 (SLRVRYLGLKGTRIRKLPQEMRKL), 732–754 (KHLEILYVGSTRISELPQEIGEL), 756–777 (HLRILDVRNTDITELPLQIREL), 778–800 (QHLHTLDVRNTPISELPPQVGKL), 802–823 (NLKIMCVRSTGVRELPKEIGEL), 824–848 (NHLQTLDVRNTRVRELPWQAGQISQ), 945–968 (MPNLQTLVLRFEALPRQPITINGT), 979–1002 (DSRLPRIAFHEDAMPNLKLLEFKF), and 1004–1027 (AGPASNDAIGITNLKSLQKVVFRC).

It belongs to the disease resistance NB-LRR family. Interacts with AVR-Pik through its N-terminal part containing the HMA-like domain.

Disease resistance (R) protein that specifically recognizes the AVR-Pik effector avirulence protein from M.oryzae. Resistance proteins guard the plant against pathogens that contain an appropriate avirulence protein via an indirect interaction with this avirulence protein. That triggers a defense system including the hypersensitive response, which restricts the pathogen growth. Contribution of Pik-2 is required to recognize the effector avirulence protein AVR-Pik. This Oryza sativa subsp. japonica (Rice) protein is Disease resistance protein Pik-1.